A 394-amino-acid polypeptide reads, in one-letter code: Protein-glutamate methylesterase/protein-glutamine glutaminase 2 (394 aa).

Residues 4–121 (KVLVVDDSSF…ARNRDEAISL (118 aa)) form the Response regulatory domain. Aspartate 55 is subject to 4-aspartylphosphate. The 193-residue stretch at 202 to 394 (SGKKYQLMAI…AERILVEVGR (193 aa)) folds into the CheB-type methylesterase domain. Active-site residues include serine 214, histidine 241, and aspartate 337.

The protein belongs to the CheB family. Post-translationally, phosphorylated by CheA. Phosphorylation of the N-terminal regulatory domain activates the methylesterase activity.

The protein localises to the cytoplasm. It carries out the reaction [protein]-L-glutamate 5-O-methyl ester + H2O = L-glutamyl-[protein] + methanol + H(+). The catalysed reaction is L-glutaminyl-[protein] + H2O = L-glutamyl-[protein] + NH4(+). Functionally, involved in chemotaxis. Part of a chemotaxis signal transduction system that modulates chemotaxis in response to various stimuli. Catalyzes the demethylation of specific methylglutamate residues introduced into the chemoreceptors (methyl-accepting chemotaxis proteins or MCP) by CheR. Also mediates the irreversible deamidation of specific glutamine residues to glutamic acid. The polypeptide is Protein-glutamate methylesterase/protein-glutamine glutaminase 2 (Photobacterium profundum (strain SS9)).